The sequence spans 188 residues: MADSSIYSTLELPEAPQVQDESRWKLKAVLHRPHLSRFAMVALGLLTVILMSLLMYQRILCCGSKDSTCSHCPSCPILWTRNGSHCYYFSMEKKDWNSSLKFCADKGSHLLTFPDNQGVKLFGEYLGQDFYWIGLRNIDGWRWEGGPALSLRILTNSLIQRCGAIHRNGLQASSCEVALQWICKKVLY.

At 1 to 33 (MADSSIYSTLELPEAPQVQDESRWKLKAVLHRP) the chain is on the cytoplasmic side. An ITIM motif motif is present at residues 5 to 10 (SIYSTL). Residues 34–56 (HLSRFAMVALGLLTVILMSLLMY) traverse the membrane as a helical; Signal-anchor for type II membrane protein segment. At 57–188 (QRILCCGSKD…LQWICKKVLY (132 aa)) the chain is on the extracellular side. Cys-75 and Cys-86 are oxidised to a cystine. N-linked (GlcNAc...) asparagine glycans are attached at residues Asn-82 and Asn-97. Positions 82 to 184 (NGSHCYYFSM…CEVALQWICK (103 aa)) constitute a C-type lectin domain. Intrachain disulfides connect Cys-103–Cys-183 and Cys-162–Cys-175.

Forms a monomer and homodimer; disulfide-linked. Interacts (via ITIM motif) with PTPN11 and INPP5D. In terms of processing, phosphorylated in response to monoclonal antibody G63 binding and antigenic stimulation. Expressed specifically on natural killer (NK) cells and activated CD8 T-cells. Not detected in spleen, thymus, lymph node, testis, brain or kidney. Not detected on mast cell lines, bone marrow-derived mast cells, or peritoneal mast cells.

Its subcellular location is the cell membrane. Functionally, plays an inhibitory role on natural killer (NK) cells and T-cell functions upon binding to their non-MHC ligands. May mediate missing self recognition by binding to a highly conserved site on classical cadherins, enabling it to monitor expression of E-cadherin/CDH1, N-cadherin/CDH2 and R-cadherin/CDH4 on target cells. This Mus musculus (Mouse) protein is Killer cell lectin-like receptor subfamily G member 1 (Klrg1).